The sequence spans 522 residues: MENIEKLLMQEKILMLELDLVRAKISLARANGSSQQGDLSLHRETPVKEEAVHSALATFTPTQVKAIPEQTAPGKESTNPLMASILPKDMNSVQTENRLVKPLDFLRPHQGIPIPQKSEPNSSVTLHRVESGIQHPHTNYYVVYNGPHAGIYDDWGCTKAATNGVPGVAHKKFATITEARAAADAYTTNQQTGRLNFIPKGEAQLKPKSFAKALISPPKQKAHWLTLGTKKPSSDPAPKEISFDPEITMDDFLYLYDLARKFDGEDDGTIFTTDNEKISLFNFRKNANPQMVREAYTAGLIKTIYPSNNLQEIKYLPKKVKDAVKRFRTNCIKNTEKDIFLKIRSTIPVWTIQGLLHKPRQVIEIGVSKKIVPTESKAMESKIQIEDLTELAVKSGEQFIQSLLRLNDKKKIFVNMVEHDTLVYSKNIKDTVSEDQRAIETFQQRVISGNLLGFHCPAICHFIMKTVEKEGGAYKCHHCEKGKAIVKDASTDRGTTDKDGPPPTRSIVEKEDVPTTSSKQVD.

Residues 487-500 (KDASTDRGTTDKDG) show a composition bias toward basic and acidic residues. The segment at 487 to 522 (KDASTDRGTTDKDGPPPTRSIVEKEDVPTTSSKQVD) is disordered.

This sequence belongs to the caulimoviridae viroplasmin family.

Its subcellular location is the host cytoplasm. In terms of biological role, enhances the ribosomal termination-reinitiation event leading to the translation of major open reading frames on the polycistronic viral RNAs. This is Transactivator/viroplasmin protein from Arabidopsis thaliana (Mouse-ear cress).